Consider the following 198-residue polypeptide: Inosine triphosphate pyrophosphatase (198 aa).

The residue at position 2 (alanine 2) is an N-acetylalanine. Position 14–19 (14–19 (TGNAKK)) interacts with ITP. Glutamate 44 lines the Mg(2+) pocket. ITP-binding positions include lysine 56, 72–73 (DT), and lysine 89. The residue at position 146 (serine 146) is a Phosphoserine. Residues 149 to 152 (FGWD), lysine 172, and 177 to 178 (HR) each bind ITP.

The protein belongs to the HAM1 NTPase family. In terms of assembly, homodimer. Mg(2+) serves as cofactor. The cofactor is Mn(2+).

The protein resides in the cytoplasm. The enzyme catalyses ITP + H2O = IMP + diphosphate + H(+). It catalyses the reaction dITP + H2O = dIMP + diphosphate + H(+). The catalysed reaction is XTP + H2O = XMP + diphosphate + H(+). It carries out the reaction N(6)-hydroxy-dATP + H2O = N(6)-hydroxy-dAMP + diphosphate + H(+). In terms of biological role, pyrophosphatase that hydrolyzes the non-canonical purine nucleotides inosine triphosphate (ITP), deoxyinosine triphosphate (dITP) as well as 2'-deoxy-N-6-hydroxylaminopurine triphosphate (dHAPTP) and xanthosine 5'-triphosphate (XTP) to their respective monophosphate derivatives. The enzyme does not distinguish between the deoxy- and ribose forms. Probably excludes non-canonical purines from RNA and DNA precursor pools, thus preventing their incorporation into RNA and DNA and avoiding chromosomal lesions. This Rattus norvegicus (Rat) protein is Inosine triphosphate pyrophosphatase (Itpa).